A 369-amino-acid chain; its full sequence is DNA replication and repair protein RecF (369 aa).

An ATP-binding site is contributed by Gly-30–Thr-37.

It belongs to the RecF family.

Its subcellular location is the cytoplasm. In terms of biological role, the RecF protein is involved in DNA metabolism; it is required for DNA replication and normal SOS inducibility. RecF binds preferentially to single-stranded, linear DNA. It also seems to bind ATP. In Oceanobacillus iheyensis (strain DSM 14371 / CIP 107618 / JCM 11309 / KCTC 3954 / HTE831), this protein is DNA replication and repair protein RecF.